The sequence spans 1953 residues: Putative surface-exposed virulence protein BigA (1953 aa).

Positions 1–27 are cleaved as a signal peptide; sequence MNPMQKKKLISIAIALTLQSYYIPAIA. 3 disordered regions span residues 31-50, 88-258, and 1496-1517; these read NDDE…EKRA, GGGD…TFSN, and TTAP…PQQL. A 1; truncated repeat occupies 101–103; that stretch reads PDN. The 15 X 11 AA tandem repeats stretch occupies residues 101–252; that stretch reads PDNGGDVTPP…DDDDTPPDDS (152 aa). The 2; truncated repeat unit spans residues 104 to 113; it reads GGDVTPPDDG. Residues 114–122 form a 3; truncated repeat; the sequence is GNVTPPDDG. 11 repeat units span residues 123 to 133, 134 to 144, 145 to 155, 156 to 166, 167 to 177, 178 to 188, 189 to 199, 200 to 210, 211 to 221, 222 to 232, and 233 to 243. 2 stretches are compositionally biased toward acidic residues: residues 141–177 and 185–249; these read DSGD…DSGD and DSGD…DTPP. One copy of the 15; truncated repeat lies at 244 to 252; that stretch reads DDDTPPDDS. Residues 1649–1952 form the Autotransporter domain; sequence SGAQATTVFR…GFMLNVKKTF (304 aa).

The chain is Putative surface-exposed virulence protein BigA (bigA) from Salmonella typhimurium (strain LT2 / SGSC1412 / ATCC 700720).